Consider the following 618-residue polypeptide: MAKLRSATSTEGRNMAGARALWRATGVKDTDFGKPIIAIANSFTQFVPGHVHLKDMGSLVASAIEEAGGIAKEFNTIAVDDGIAMGHGGMLYSLPSRELIADSVEYMVNAHCADALVCISNCDKITPGMLMAALRLNIPVVFVSGGPMEAGKTKLSDKLIKLDLVDAMVAAADDRISDADSEKIERSACPTCGSCSGMFTANSMNCLTEALGLSLPGNGSMLATHADRRELFLEAGRRVMKLAKRYYGDDDASVLPRSIASFKAFENAMALDVAMGGSSNTVLHLLAAAQEAEVDFTMDDIDRISRKVPHLCKVAPSTPKYHMEDVHRAGGVMAILGELDRAGLLHTDVNHVASEDGTLKSVLERFDVVLTKDEKVHEFFRAGPAGIPTTRAFSQSCRWDTLDDDRREGCIRSREFAFSQEGGLAVLSGNLAENGCIVKTAGVDESNLKFSGVARVYESQEDAVAGILGGEVVAGDVVVIRFEGPKGGPGMQEMLYPTSYLKSRGLGTQCALITDGRFSGGTSGLSIGHVSPEAASGGTIGLIENGDRIDIDIPGRSIKLLVSDAELESRRAAMNAKGPLAWKPLSRVRPVSMALKAYAMLATSADKGAVRDVSKLEG.

A Mg(2+)-binding site is contributed by Asp81. Cys122 provides a ligand contact to [2Fe-2S] cluster. Asp123 and Lys124 together coordinate Mg(2+). The residue at position 124 (Lys124) is an N6-carboxylysine. Residue Cys195 participates in [2Fe-2S] cluster binding. Glu493 provides a ligand contact to Mg(2+). The active-site Proton acceptor is the Ser519.

This sequence belongs to the IlvD/Edd family. In terms of assembly, homodimer. It depends on [2Fe-2S] cluster as a cofactor. Mg(2+) serves as cofactor.

The enzyme catalyses (2R)-2,3-dihydroxy-3-methylbutanoate = 3-methyl-2-oxobutanoate + H2O. It carries out the reaction (2R,3R)-2,3-dihydroxy-3-methylpentanoate = (S)-3-methyl-2-oxopentanoate + H2O. It functions in the pathway amino-acid biosynthesis; L-isoleucine biosynthesis; L-isoleucine from 2-oxobutanoate: step 3/4. The protein operates within amino-acid biosynthesis; L-valine biosynthesis; L-valine from pyruvate: step 3/4. Functions in the biosynthesis of branched-chain amino acids. Catalyzes the dehydration of (2R,3R)-2,3-dihydroxy-3-methylpentanoate (2,3-dihydroxy-3-methylvalerate) into 2-oxo-3-methylpentanoate (2-oxo-3-methylvalerate) and of (2R)-2,3-dihydroxy-3-methylbutanoate (2,3-dihydroxyisovalerate) into 2-oxo-3-methylbutanoate (2-oxoisovalerate), the penultimate precursor to L-isoleucine and L-valine, respectively. In Shewanella amazonensis (strain ATCC BAA-1098 / SB2B), this protein is Dihydroxy-acid dehydratase.